A 188-amino-acid polypeptide reads, in one-letter code: MTKKTSHHKAEQKEKRAGEESGRESEVLDHKIEELENELIGAREQADKLREELLRKAAEFENFRRQKEREALMAGSRTLETVIRELLPFVDDVVRIVEHAPELLEKTEDARPYVDGAELLKKNLVRWLEDKGVTRIDALGKKMDVNLHEAITQVEYPDVEPETVVEVFQDGYVLGDRVLRHTKVVVAK.

Residues 1 to 30 are disordered; it reads MTKKTSHHKAEQKEKRAGEESGRESEVLDH. A compositionally biased stretch (basic and acidic residues) spans 8-30; it reads HKAEQKEKRAGEESGRESEVLDH.

It belongs to the GrpE family. As to quaternary structure, homodimer.

The protein resides in the cytoplasm. Participates actively in the response to hyperosmotic and heat shock by preventing the aggregation of stress-denatured proteins, in association with DnaK and GrpE. It is the nucleotide exchange factor for DnaK and may function as a thermosensor. Unfolded proteins bind initially to DnaJ; upon interaction with the DnaJ-bound protein, DnaK hydrolyzes its bound ATP, resulting in the formation of a stable complex. GrpE releases ADP from DnaK; ATP binding to DnaK triggers the release of the substrate protein, thus completing the reaction cycle. Several rounds of ATP-dependent interactions between DnaJ, DnaK and GrpE are required for fully efficient folding. This is Protein GrpE from Chlorobium phaeobacteroides (strain BS1).